Reading from the N-terminus, the 2325-residue chain is Otogelin-like protein (2325 aa).

Positions 1–22 (MVPWRALSLPILLVSLRGYVCA) are cleaved as a signal peptide. Residues 112–288 (GICKTWGQYH…VLTPDDTKCV (177 aa)) enclose the VWFD 1 domain. 2 disulfides stabilise this stretch: Cys-114/Cys-248 and Cys-136/Cys-287. A glycan (N-linked (GlcNAc...) asparagine) is linked at Asn-425. A VWFD 2 domain is found at 472–645 (VQCSVVGDSH…HAWRVSSTCF (174 aa)). Cystine bridges form between Cys-474-Cys-609, Cys-496-Cys-644, and Cys-518-Cys-526. One can recognise a TIL 1 domain in the interval 736–791 (CQKGMLYHHCSSLCLRSCTSLSSPEQCKDDCAEGCNCPEGKFYEETLNFCVPIYHC). N-linked (GlcNAc...) asparagine glycosylation is found at Asn-817 and Asn-867. Residues 937–1114 (AVCTVYGDRH…DLMEALKPCE (178 aa)) form the VWFD 3 domain. Intrachain disulfides connect Cys-939-Cys-1069, Cys-961-Cys-1113, and Cys-983-Cys-990. Asn-1280 carries N-linked (GlcNAc...) asparagine glycosylation. The TIL 2 domain maps to 1366–1418 (RYEPCATPCFKTCSDPEALACTFLPPVEGCLPYCPKNMILDETTLKCVHPEDC). The VWFD 4 domain maps to 1506–1695 (CRCSMLSELS…SWEIEKSFEV (190 aa)). Cystine bridges form between Cys-1508-Cys-1655 and Cys-1549-Cys-1571. N-linked (GlcNAc...) asparagine glycans are attached at residues Asn-1576 and Asn-2170. 4 cysteine pairs are disulfide-bonded: Cys-2233-Cys-2289, Cys-2254-Cys-2303, Cys-2265-Cys-2320, and Cys-2269-Cys-2322. In terms of domain architecture, CTCK spans 2233–2325 (CKREERICQK…EPIDCTCQWN (93 aa)). The N-linked (GlcNAc...) asparagine glycan is linked to Asn-2296.

This sequence belongs to the otogelin family.

Its subcellular location is the secreted. In Mus musculus (Mouse), this protein is Otogelin-like protein (Otogl).